Reading from the N-terminus, the 178-residue chain is Protein GrpE (178 aa).

The protein belongs to the GrpE family. Homodimer.

It localises to the cytoplasm. Functionally, participates actively in the response to hyperosmotic and heat shock by preventing the aggregation of stress-denatured proteins, in association with DnaK and GrpE. It is the nucleotide exchange factor for DnaK and may function as a thermosensor. Unfolded proteins bind initially to DnaJ; upon interaction with the DnaJ-bound protein, DnaK hydrolyzes its bound ATP, resulting in the formation of a stable complex. GrpE releases ADP from DnaK; ATP binding to DnaK triggers the release of the substrate protein, thus completing the reaction cycle. Several rounds of ATP-dependent interactions between DnaJ, DnaK and GrpE are required for fully efficient folding. The protein is Protein GrpE of Rickettsia typhi (strain ATCC VR-144 / Wilmington).